The sequence spans 430 residues: Tumor necrosis factor receptor superfamily member 19L (430 aa).

The first 25 residues, 1–25 (MKPSLLCRPLSCFLMLLPWPLATLT), serve as a signal peptide directing secretion. At 26 to 162 (STTLWQCPPG…AGGPEETAAQ (137 aa)) the chain is on the extracellular side. The stretch at 50–90 (PCPPGTFSAAWGSSPCQPHARCSLWRRLEAQVGMATRDTLC) is one TNFR-Cys repeat. Intrachain disulfides connect Cys51–Cys65 and Cys71–Cys90. The segment covering 134–143 (VAAGASSGGE) has biased composition (low complexity). Residues 134 to 156 (VAAGASSGGETRQPGNGTRAGGP) form a disordered region. An N-linked (GlcNAc...) asparagine glycan is attached at Asn149. The chain crosses the membrane as a helical span at residues 163 to 183 (YAVIAIVPVFCLMGLLGILVC). At 184-430 (NLLKRKGYHC…VRLSESNLVI (247 aa)) the chain is on the cytoplasmic side. Thr223 carries the phosphothreonine modification. An RFRV motif; mediates interaction with STK39 motif is present at residues 349 to 352 (RFRV). Positions 373–410 (AGPSWGDLPDSPQPGLPPEQQALLGSGGSRTKWLKPPA) are disordered.

The protein belongs to the RELT family. In terms of assembly, interacts with TRAF1. Interacts with RELL1, RELL2 and OXSR1. Interacts with PLSCR1. Interacts with STK39. Phosphorylated in vitro by OXSR1. Phosphorylated by STK39. Spleen, lymph node, brain, breast and peripheral blood leukocytes (at protein level). Expressed highly in bone marrow and fetal liver. Very low levels in skeletal muscle, testis and colon. Not detected in kidney and pancreas.

The protein resides in the cell membrane. It is found in the cytoplasm. It localises to the perinuclear region. Functionally, may play a role in apoptosis. Induces activation of MAPK14/p38 and MAPK8/JNK MAPK cascades, when overexpressed. Involved in dental enamel formation. This Homo sapiens (Human) protein is Tumor necrosis factor receptor superfamily member 19L (RELT).